The primary structure comprises 81 residues: Photosystem I iron-sulfur center (81 aa).

2 consecutive 4Fe-4S ferredoxin-type domains span residues 2 to 31 and 39 to 68; these read SHSV…MIPW and IASA…VRVY. Cys-11, Cys-14, Cys-17, Cys-21, Cys-48, Cys-51, Cys-54, and Cys-58 together coordinate [4Fe-4S] cluster.

In terms of assembly, the eukaryotic PSI reaction center is composed of at least 11 subunits. [4Fe-4S] cluster serves as cofactor.

The protein localises to the plastid. Its subcellular location is the chloroplast thylakoid membrane. The enzyme catalyses reduced [plastocyanin] + hnu + oxidized [2Fe-2S]-[ferredoxin] = oxidized [plastocyanin] + reduced [2Fe-2S]-[ferredoxin]. In terms of biological role, apoprotein for the two 4Fe-4S centers FA and FB of photosystem I (PSI); essential for photochemical activity. FB is the terminal electron acceptor of PSI, donating electrons to ferredoxin. The C-terminus interacts with PsaA/B/D and helps assemble the protein into the PSI complex. Required for binding of PsaD and PsaE to PSI. PSI is a plastocyanin-ferredoxin oxidoreductase, converting photonic excitation into a charge separation, which transfers an electron from the donor P700 chlorophyll pair to the spectroscopically characterized acceptors A0, A1, FX, FA and FB in turn. The chain is Photosystem I iron-sulfur center from Triticum aestivum (Wheat).